Here is a 216-residue protein sequence, read N- to C-terminus: Probable methylthioribulose-1-phosphate dehydratase (216 aa).

Substrate is bound at residue C87. Zn(2+) contacts are provided by H105 and H107. E129 acts as the Proton donor/acceptor in catalysis.

This sequence belongs to the aldolase class II family. MtnB subfamily. The cofactor is Zn(2+).

It localises to the cytoplasm. The enzyme catalyses 5-(methylsulfanyl)-D-ribulose 1-phosphate = 5-methylsulfanyl-2,3-dioxopentyl phosphate + H2O. The protein operates within amino-acid biosynthesis; L-methionine biosynthesis via salvage pathway; L-methionine from S-methyl-5-thio-alpha-D-ribose 1-phosphate: step 2/6. Catalyzes the dehydration of methylthioribulose-1-phosphate (MTRu-1-P) into 2,3-diketo-5-methylthiopentyl-1-phosphate (DK-MTP-1-P). This chain is Probable methylthioribulose-1-phosphate dehydratase, found in Drosophila persimilis (Fruit fly).